The primary structure comprises 205 residues: uncharacterized protein (205 aa).

The 82-residue stretch at 1–82 (MIKVYGVPGW…MVLDRRPDLA (82 aa)) folds into the GST N-terminal domain. Residues V53 and 66-67 (ET) each bind glutathione. The region spanning 86 to 205 (GRAERQLFQR…QEVLKRNEII (120 aa)) is the GST C-terminal domain.

The protein belongs to the GST superfamily. Beta family.

This is an uncharacterized protein from Escherichia coli (strain K12).